The following is a 634-amino-acid chain: MGKVVGIDLGTTNSCVAVMEGGKPVVIANAEGFRTTPSVVAYTKNQDQLVGQIAKRQAVMNTDNTFYSAKRFVGRRVDEVNEESKEVSYEVEKSGSNVRLKCPVLDKQFSPEEVSAQVLRKLAEDAGKYLGENVTQAVITVPAYFNDSQRQATKDAGKIAGLEVLRIINEPTAAALAYGLDKKSNERILVFDLGGGTFDVSVLEVGDGVFEVLSTSGDTHLGGDDFDKVIVDHLAATFKANEGIDLRQDKQALQRLTEAAEKAKIELSSATQSEINLPFITATSEGPKHLDLTLTRAKFEELASKLIDRCRVPVEQALKDAKLSSGELDEIVMVGGSSRMPAVQELVKRVTGKDPNQTVNPDEVVAVGAAIQGGVLAGEVKDILLLDVTPLSLGVETLGGVMTKMITRNTTVPTKKSETYSTAVDGQTNVEIHVLQGEREMASDNKSLGTFRLDGIPPAPRGVPQIEVTFDIDANGILSVNAKDKGSGKEQSISITGASTLSENEVEKMVKDAETNASADKEKRERIDIKNQAETLVYQAEKQLGELADKVDADSKAKVEDKRVKLKAAIEKDDFDAMKSLLEELQQELYTVGASVYQQAGAAAAESGADAGAAGAGDSSSGDDVIDAEFTESK.

Thr197 carries the post-translational modification Phosphothreonine; by autocatalysis. A compositionally biased stretch (low complexity) spans 601 to 623 (GAAAAESGADAGAAGAGDSSSGD). Residues 601-634 (GAAAAESGADAGAAGAGDSSSGDDVIDAEFTESK) form a disordered region. Residues 624–634 (DVIDAEFTESK) are compositionally biased toward acidic residues.

Belongs to the heat shock protein 70 family.

Acts as a chaperone. The protein is Chaperone protein dnaK2 (dnaK2) of Prochlorococcus marinus (strain MIT 9313).